A 274-amino-acid polypeptide reads, in one-letter code: Protein TIC 20-I, chloroplastic (274 aa).

A chloroplast-targeting transit peptide spans M1–P65. Transmembrane regions (helical) follow at residues L130–F152, I167–V187, V200–M220, and F229–I249.

This sequence belongs to the Tic20 family. Part of the Tic complex. Component of the 1-MD complex, composed of TIC20-I, TIC214, TIC100 and TIC56. Interacts with the translocating preproteins. Hydrolysis of ATP is essential for the formation of this complex. The 1-MD complex interacts with TIC21. In terms of tissue distribution, expressed in leaves, shoots and roots. High expression in mature photosynthetic tissues. Lower levels in non-photosynthetic tissues and roots.

The protein localises to the plastid. It localises to the chloroplast inner membrane. Functionally, involved in protein precursor import into chloroplasts. May be part of an intermediate translocation complex acting as a protein-conducting channel at the inner envelope. Seems to be specific for photosynthesis-related pre-proteins. Partially redundant with TIC20-IV, but not with TIC20-II or TIC20-V. This chain is Protein TIC 20-I, chloroplastic, found in Arabidopsis thaliana (Mouse-ear cress).